The sequence spans 107 residues: Glutaredoxin 4 (107 aa).

The Glutaredoxin domain occupies 4–106 (LDKIKKQISE…TLLAEVAAKH (103 aa)). Residue K21 participates in glutathione binding. Position 29 (C29) interacts with [2Fe-2S] cluster. Residues R58, F70, and 83–84 (CD) contribute to the glutathione site.

This sequence belongs to the glutaredoxin family. Monothiol subfamily. In terms of assembly, homodimer.

It localises to the cytoplasm. Monothiol glutaredoxin involved in the biogenesis of iron-sulfur clusters. The protein is Glutaredoxin 4 (grxD) of Haemophilus influenzae (strain ATCC 51907 / DSM 11121 / KW20 / Rd).